The primary structure comprises 441 residues: Proline--tRNA ligase (441 aa).

Belongs to the class-II aminoacyl-tRNA synthetase family. ProS type 2 subfamily. In terms of assembly, homodimer.

It localises to the cytoplasm. The catalysed reaction is tRNA(Pro) + L-proline + ATP = L-prolyl-tRNA(Pro) + AMP + diphosphate. Functionally, catalyzes the attachment of proline to tRNA(Pro) in a two-step reaction: proline is first activated by ATP to form Pro-AMP and then transferred to the acceptor end of tRNA(Pro). This Methylorubrum extorquens (strain PA1) (Methylobacterium extorquens) protein is Proline--tRNA ligase.